We begin with the raw amino-acid sequence, 446 residues long: Chromosomal replication initiator protein DnaA (446 aa).

Residues 1 to 73 (MAAQLNELWQ…INSMKIITTK (73 aa)) form a domain I, interacts with DnaA modulators region. The domain II stretch occupies residues 73-107 (KKYDIAFLISSEEALETDEDQETDTNNVNTDTSSS). The segment at 108 to 324 (MLNPKYKFDS…GALIRIVAFS (217 aa)) is domain III, AAA+ region. Residues Gly-152, Gly-154, Lys-155, and Thr-156 each contribute to the ATP site. The domain IV, binds dsDNA stretch occupies residues 325-446 (SLTNKEISVD…NEITKRFSPK (122 aa)).

This sequence belongs to the DnaA family. As to quaternary structure, oligomerizes as a right-handed, spiral filament on DNA at oriC.

Its subcellular location is the cytoplasm. Its function is as follows. Plays an essential role in the initiation and regulation of chromosomal replication. ATP-DnaA binds to the origin of replication (oriC) to initiate formation of the DNA replication initiation complex once per cell cycle. Binds the DnaA box (a 9 base pair repeat at the origin) and separates the double-stranded (ds)DNA. Forms a right-handed helical filament on oriC DNA; dsDNA binds to the exterior of the filament while single-stranded (ss)DNA is stabiized in the filament's interior. The ATP-DnaA-oriC complex binds and stabilizes one strand of the AT-rich DNA unwinding element (DUE), permitting loading of DNA polymerase. After initiation quickly degrades to an ADP-DnaA complex that is not apt for DNA replication. Binds acidic phospholipids. This chain is Chromosomal replication initiator protein DnaA, found in Clostridium acetobutylicum (strain ATCC 824 / DSM 792 / JCM 1419 / IAM 19013 / LMG 5710 / NBRC 13948 / NRRL B-527 / VKM B-1787 / 2291 / W).